We begin with the raw amino-acid sequence, 394 residues long: MEGISALEKNVAELTVMDVYDIASAVGQEFERVIDQYGCEVIGRLMPKVVRVLEILEVLVSRNHINPEMEELRLELDRLRLERMDRIEKEKKHQKELELVEDVWRGEAQDLLNQIAQLQEENKQLVSNLSQKDINLTEEEFQKHEGMSERERQVMKKLKEVVDKQRDEIRAKDRELVLKNEDVEALQQQQSRLMKINHDLRHRVTVVEAQGKALIEQKVELEAYLQTKEQEAASMRLEIGKLRDKLKGEQHTNGEEIKTETLNEESILETEKLSLDLKDSNRPRFTLQELRDVLHERNELKAKVFMLQEELAYYKSEEADEEHKLPQSSPVIDSKAPIPQESGIKRLFSFFSRDKKRMPMMQKNVHFQESFGQWTEYNRDDVYTEQGQEALQHM.

The 88-residue stretch at 2-89 (EGISALEKNV…RLERMDRIEK (88 aa)) folds into the RH1 domain. Residues 68–312 (EMEELRLELD…KVFMLQEELA (245 aa)) are a coiled coil. Residues 282-347 (RPRFTLQELR…IPQESGIKRL (66 aa)) enclose the RH2 domain. Positions 318–337 (EADEEHKLPQSSPVIDSKAP) are disordered.

Belongs to the RILPL family.

The protein resides in the cytoplasm. Its subcellular location is the cytosol. It is found in the cytoskeleton. It localises to the microtubule organizing center. The protein localises to the centrosome. The protein resides in the cell projection. Its subcellular location is the cilium. Plays a role in the regulation of cell shape and polarity. Plays a role in cellular protein transport, including protein transport away from primary cilia. Neuroprotective protein. This Xenopus tropicalis (Western clawed frog) protein is RILP-like protein 1 (rilpl1).